Consider the following 520-residue polypeptide: Cyclic AMP-responsive element-binding protein 3-like protein 2 (520 aa).

The Cytoplasmic portion of the chain corresponds to 1–379 (MEVLESGEQG…KLAGTQTGTC (379 aa)). Ser-93 is modified (phosphoserine). Residue Lys-178 forms a Glycyl lysine isopeptide (Lys-Gly) (interchain with G-Cter in SUMO2) linkage. Phosphoserine is present on Ser-191. The disordered stretch occupies residues 195-264 (APVDHLHLPP…PHKLQGSGPL (70 aa)). Composition is skewed to low complexity over residues 208–220 (SSHGSDSEGSLSP) and 234–255 (SPSRAAPRAPSALSSSPLLTAP). Residues 294-357 (ALKKIRRKIK…RTLLQQLQKL (64 aa)) form the bZIP domain. Residues 296 to 325 (KKIRRKIKNKISAQESRRKKKEYMDSLEKK) are basic motif. The segment at 336–357 (LRKKVEVLENTNRTLLQQLQKL) is leucine-zipper. The chain crosses the membrane as a helical; Signal-anchor for type II membrane protein span at residues 380–400 (LMVVVLCFAVAFGSFFQGYGP). At 401-520 (YPSATKMALP…ELDRRVNTTF (120 aa)) the chain is on the lumenal side. Positions 427–430 (RNLL) match the S1P recognition motif. Residues Asn-480, Asn-504, and Asn-517 are each glycosylated (N-linked (GlcNAc...) asparagine).

It belongs to the bZIP family. ATF subfamily. Binds DNA as a dimer. Post-translationally, upon ER stress, translocated to the Golgi apparatus, where it is processed by regulated intramembrane proteolysis (RIP) to release the cytosol-facing N-terminal transcription factor domain. The cleavage is performed sequentially by site-1 and site-2 proteases (S1P/MBTPS1 and S2P/MBTPS2). N-glycosylated. In terms of processing, ubiquitinated by HRD1/SYVN1; undergoes 'Lys-48'-linked ubiquitination, followed by rapid proteasomal degradation under normal conditions. Upon ER stress, SYVN1 E3 ubiquitin-protein ligase dissociates from its substrate, ubiquitination does not occur and CREB3L2 is stabilized. As to expression, widely expressed with highest levels in placenta, lung, spleen and intestine, and lowest levels in heart, brain, skeletal muscle, thymus, colon and leukocytes. In fetal tissues, the weakest expression is detected in brain and heart.

Its subcellular location is the endoplasmic reticulum membrane. It is found in the nucleus. Its function is as follows. Transcription factor involved in unfolded protein response (UPR). In the absence of endoplasmic reticulum (ER) stress, inserted into ER membranes, with N-terminal DNA-binding and transcription activation domains oriented toward the cytosolic face of the membrane. In response to ER stress, transported to the Golgi, where it is cleaved in a site-specific manner by resident proteases S1P/MBTPS1 and S2P/MBTPS2. The released N-terminal cytosolic domain is translocated to the nucleus to effect transcription of specific target genes. Plays a critical role in chondrogenesis by activating the transcription of SEC23A, which promotes the transport and secretion of cartilage matrix proteins, and possibly that of ER biogenesis-related genes. In a neuroblastoma cell line, protects cells from ER stress-induced death. In vitro activates transcription of target genes via direct binding to the CRE site. The protein is Cyclic AMP-responsive element-binding protein 3-like protein 2 (CREB3L2) of Homo sapiens (Human).